The chain runs to 338 residues: Glycerol-3-phosphate dehydrogenase [NAD(P)+] (338 aa).

Positions 11, 12, 32, 33, and 109 each coordinate NADPH. Sn-glycerol 3-phosphate contacts are provided by K109, G140, and S142. A144 contacts NADPH. The sn-glycerol 3-phosphate site is built by K195, D248, S258, R259, and N260. Catalysis depends on K195, which acts as the Proton acceptor. An NADPH-binding site is contributed by R259. The NADPH site is built by V283 and E285.

Belongs to the NAD-dependent glycerol-3-phosphate dehydrogenase family.

The protein resides in the cytoplasm. It catalyses the reaction sn-glycerol 3-phosphate + NAD(+) = dihydroxyacetone phosphate + NADH + H(+). It carries out the reaction sn-glycerol 3-phosphate + NADP(+) = dihydroxyacetone phosphate + NADPH + H(+). It functions in the pathway membrane lipid metabolism; glycerophospholipid metabolism. Catalyzes the reduction of the glycolytic intermediate dihydroxyacetone phosphate (DHAP) to sn-glycerol 3-phosphate (G3P), the key precursor for phospholipid synthesis. This Leuconostoc citreum (strain KM20) protein is Glycerol-3-phosphate dehydrogenase [NAD(P)+].